The sequence spans 241 residues: Ribonuclease 3 (241 aa).

One can recognise an RNase III domain in the interval 16–144 (HAEFEKKINY…VIGAIFQDGG (129 aa)). Glu-57 lines the Mg(2+) pocket. Active-site residues include Asp-61 and Glu-133. Mg(2+) is bound at residue Glu-133. Residues 171–240 (DAKSRLQEIL…AALAIKKIES (70 aa)) enclose the DRBM domain.

This sequence belongs to the ribonuclease III family. As to quaternary structure, homodimer. The cofactor is Mg(2+).

It is found in the cytoplasm. It carries out the reaction Endonucleolytic cleavage to 5'-phosphomonoester.. Its function is as follows. Digests double-stranded RNA. Involved in the processing of primary rRNA transcript to yield the immediate precursors to the large and small rRNAs (23S and 16S). Processes some mRNAs, and tRNAs when they are encoded in the rRNA operon. Processes pre-crRNA and tracrRNA of type II CRISPR loci if present in the organism. This chain is Ribonuclease 3, found in Desulfotalea psychrophila (strain LSv54 / DSM 12343).